The chain runs to 150 residues: Putative solute carrier family 19 member 4 (150 aa).

Residues 118–137 form a disordered region; the sequence is PSVREGACNEKSTENKKPQD. Basic and acidic residues predominate over residues 124-136; that stretch reads ACNEKSTENKKPQ.

This sequence belongs to the reduced folate carrier (RFC) transporter (TC 2.A.48) family.

This Homo sapiens (Human) protein is Putative solute carrier family 19 member 4.